Here is a 203-residue protein sequence, read N- to C-terminus: DNA-binding transcriptional repressor ScoC (203 aa).

Residues 13-157 form the HTH marR-type domain; sequence ALVFTQKMAQ…MMCMIRHIYG (145 aa). The segment at residues 63–86 is a DNA-binding region (H-T-H motif); sequence ISEIAKFGVMHVSTAFNFSKKLEE. The tract at residues 183 to 203 is disordered; sequence KKKAKDSAADEPAEELEPVNS. Acidic residues predominate over residues 191–203; that stretch reads ADEPAEELEPVNS.

Homodimer. Interacts with SinR.

Functionally, negative regulator of protease production and sporulation. Acts by binding directly to the promoter of protease genes (aprE and nprE), and by repressing oligopeptide permease operons (appABCDF and oppABCDF), thereby preventing uptake of oligopeptides required for initiation of sporulation. Acts with SinR as a corepressor of epr expression. Binds to non-m6A-5-methylated 5'-GACGAG-3' sites, tested with scpA; when the target is methylated by DnmA, this repressor no longer binds and transcription is up-regulated. This is DNA-binding transcriptional repressor ScoC from Bacillus subtilis (strain 168).